Reading from the N-terminus, the 581-residue chain is UvrABC system protein C (581 aa).

Residues 15–94 (REPGVYLFEQ…IKRHRPPYNV (80 aa)) form the GIY-YIG domain. The UVR domain occupies 202–237 (GVLADPLRREMEAAAQNQEFERAANLRDKLGAVEAL).

It belongs to the UvrC family. As to quaternary structure, interacts with UvrB in an incision complex.

The protein localises to the cytoplasm. The UvrABC repair system catalyzes the recognition and processing of DNA lesions. UvrC both incises the 5' and 3' sides of the lesion. The N-terminal half is responsible for the 3' incision and the C-terminal half is responsible for the 5' incision. This is UvrABC system protein C from Haloarcula marismortui (strain ATCC 43049 / DSM 3752 / JCM 8966 / VKM B-1809) (Halobacterium marismortui).